A 117-amino-acid chain; its full sequence is Immunoglobulin heavy variable 4-4 (117 aa).

The first 19 residues, 1–19 (MKHLWFFLLLVAAPRWVLS), serve as a signal peptide directing secretion. The segment at 20–44 (QVQLQESGPGLVKPSGTLSLTCAVS) is framework-1. Residues 20–117 (QVQLQESGPG…ADTAVYYCAR (98 aa)) form the Ig-like domain. An intrachain disulfide couples Cys41 to Cys115. The tract at residues 45-53 (GGSISSSNW) is complementarity-determining-1. Residues 54-70 (WSWVRQPPGKGLEWIGE) are framework-2. Positions 71–77 (IYHSGST) are complementarity-determining-2. Residues 78–115 (NYNPSLKSRVTISVDKSKNQFSLKLSSVTAADTAVYYC) form a framework-3 region. A complementarity-determining-3 region spans residues 116–117 (AR).

As to quaternary structure, immunoglobulins are composed of two identical heavy chains and two identical light chains; disulfide-linked.

Its subcellular location is the secreted. The protein localises to the cell membrane. Functionally, v region of the variable domain of immunoglobulin heavy chains that participates in the antigen recognition. Immunoglobulins, also known as antibodies, are membrane-bound or secreted glycoproteins produced by B lymphocytes. In the recognition phase of humoral immunity, the membrane-bound immunoglobulins serve as receptors which, upon binding of a specific antigen, trigger the clonal expansion and differentiation of B lymphocytes into immunoglobulins-secreting plasma cells. Secreted immunoglobulins mediate the effector phase of humoral immunity, which results in the elimination of bound antigens. The antigen binding site is formed by the variable domain of one heavy chain, together with that of its associated light chain. Thus, each immunoglobulin has two antigen binding sites with remarkable affinity for a particular antigen. The variable domains are assembled by a process called V-(D)-J rearrangement and can then be subjected to somatic hypermutations which, after exposure to antigen and selection, allow affinity maturation for a particular antigen. In Homo sapiens (Human), this protein is Immunoglobulin heavy variable 4-4.